Here is a 410-residue protein sequence, read N- to C-terminus: Succinyl-CoA:(R)-benzylsuccinate CoA-transferase subunit BbsE (410 aa).

This sequence belongs to the CoA-transferase III family. Heterotetramer composed of 2 BbsE subunits and 2 BbsF subunits.

It catalyses the reaction (R)-2-benzylsuccinate + succinyl-CoA = (R)-2-benzylsuccinyl-CoA + succinate. It participates in xenobiotic degradation; toluene degradation. Inhibited by (S)-benzylsuccinyl-CoA. Functionally, catalyzes the reversible conversion of (R)-2-benzylsuccinate to (R)-2-benzylsuccinyl-CoA. Inactive with (S)-benzylsuccinate. This is Succinyl-CoA:(R)-benzylsuccinate CoA-transferase subunit BbsE (bbsE) from Thauera aromatica.